A 431-amino-acid polypeptide reads, in one-letter code: Glucose-1-phosphate adenylyltransferase (431 aa).

Position 39 (K39) interacts with beta-D-fructose 1,6-bisphosphate. R40, H46, and R52 together coordinate AMP. Y114 is an alpha-D-glucose 1-phosphate binding site. Residue R130 coordinates AMP. Residues G179, 194-195 (EK), and S212 each bind alpha-D-glucose 1-phosphate. Residues E370 and R386 each coordinate AMP. Residues 419–423 (REMLR) and 429–431 (QER) each bind beta-D-fructose 1,6-bisphosphate.

This sequence belongs to the bacterial/plant glucose-1-phosphate adenylyltransferase family. Homotetramer.

It carries out the reaction alpha-D-glucose 1-phosphate + ATP + H(+) = ADP-alpha-D-glucose + diphosphate. Its pathway is glycan biosynthesis; glycogen biosynthesis. Its activity is regulated as follows. Allosterically activated by fructose-1,6-bisphosphate (F16BP) and inhibited by AMP. Its function is as follows. Involved in the biosynthesis of ADP-glucose, a building block required for the elongation reactions to produce glycogen. Catalyzes the reaction between ATP and alpha-D-glucose 1-phosphate (G1P) to produce pyrophosphate and ADP-Glc. This Escherichia coli O127:H6 (strain E2348/69 / EPEC) protein is Glucose-1-phosphate adenylyltransferase.